Reading from the N-terminus, the 272-residue chain is Exosome complex component MTR3 (272 aa).

The disordered stretch occupies residues 1–36 (MPGDHRRIRGPEESQPPQLYAADEEEAPGTRDPTRL).

Belongs to the RNase PH family. As to quaternary structure, component of the RNA exosome core complex (Exo-9), composed of EXOSC1, EXOSC2, EXOSC3, EXOSC4, EXOSC5, EXOSC6, EXOSC7, EXOSC8 and EXOSC9; within the complex interacts with EXOSC1, EXOSC7 and EXOSC8. The catalytically inactive Exo-9 may associate with the catalytic subunit EXOSC10/RRP6. Exo-9 may associate with DIS3 to form the nucleolar exosome complex, or DIS3L to form the cytoplasmic exosome complex. Exo-9 is formed by a hexameric base ring consisting of the heterodimers EXOSC4-EXOSC9, EXOSC5-EXOSC8 and EXOSC6-EXOSC7, and a cap ring consisting of EXOSC1, EXOSC2 and EXOSC3. The RNA exosome complex associates with cofactors EXOSC10/RRP6, C1D/RRP47, MPHOSPH6/MPP6 and MTREX/MTR4.

It localises to the cytoplasm. Its subcellular location is the nucleus. It is found in the nucleolus. In terms of biological role, non-catalytic component of the RNA exosome complex which has 3'-&gt;5' exoribonuclease activity and participates in a multitude of cellular RNA processing and degradation events. In the nucleus, the RNA exosome complex is involved in proper maturation of stable RNA species such as rRNA, snRNA and snoRNA, in the elimination of RNA processing by-products and non-coding 'pervasive' transcripts, such as antisense RNA species and promoter-upstream transcripts (PROMPTs), and of mRNAs with processing defects, thereby limiting or excluding their export to the cytoplasm. The RNA exosome may be involved in Ig class switch recombination (CSR) and/or Ig variable region somatic hypermutation (SHM) by targeting AICDA deamination activity to transcribed dsDNA substrates. In the cytoplasm, the RNA exosome complex is involved in general mRNA turnover and specifically degrades inherently unstable mRNAs containing AU-rich elements (AREs) within their 3' untranslated regions, and in RNA surveillance pathways, preventing translation of aberrant mRNAs. It seems to be involved in degradation of histone mRNA. The catalytic inactive RNA exosome core complex of 9 subunits (Exo-9) is proposed to play a pivotal role in the binding and presentation of RNA for ribonucleolysis, and to serve as a scaffold for the association with catalytic subunits and accessory proteins or complexes. The polypeptide is Exosome complex component MTR3 (EXOSC6) (Homo sapiens (Human)).